The primary structure comprises 513 residues: Bifunctional purine biosynthesis protein PurH (513 aa).

The 145-residue stretch at 1–145 (MTKRALISVS…KNYQDVTAVV (145 aa)) folds into the MGS-like domain.

Belongs to the PurH family.

It catalyses the reaction (6R)-10-formyltetrahydrofolate + 5-amino-1-(5-phospho-beta-D-ribosyl)imidazole-4-carboxamide = 5-formamido-1-(5-phospho-D-ribosyl)imidazole-4-carboxamide + (6S)-5,6,7,8-tetrahydrofolate. It carries out the reaction IMP + H2O = 5-formamido-1-(5-phospho-D-ribosyl)imidazole-4-carboxamide. It functions in the pathway purine metabolism; IMP biosynthesis via de novo pathway; 5-formamido-1-(5-phospho-D-ribosyl)imidazole-4-carboxamide from 5-amino-1-(5-phospho-D-ribosyl)imidazole-4-carboxamide (10-formyl THF route): step 1/1. The protein operates within purine metabolism; IMP biosynthesis via de novo pathway; IMP from 5-formamido-1-(5-phospho-D-ribosyl)imidazole-4-carboxamide: step 1/1. The chain is Bifunctional purine biosynthesis protein PurH from Enterococcus faecalis (strain ATCC 700802 / V583).